We begin with the raw amino-acid sequence, 212 residues long: Thymidylate kinase (212 aa).

ATP is bound at residue Gly-13–Ser-20.

The protein belongs to the thymidylate kinase family.

It carries out the reaction dTMP + ATP = dTDP + ADP. Its function is as follows. Phosphorylation of dTMP to form dTDP in both de novo and salvage pathways of dTTP synthesis. The chain is Thymidylate kinase from Legionella pneumophila (strain Corby).